A 101-amino-acid chain; its full sequence is Small ribosomal subunit protein uS14 (101 aa).

Belongs to the universal ribosomal protein uS14 family. As to quaternary structure, part of the 30S ribosomal subunit. Contacts proteins S3 and S10.

Its function is as follows. Binds 16S rRNA, required for the assembly of 30S particles and may also be responsible for determining the conformation of the 16S rRNA at the A site. The protein is Small ribosomal subunit protein uS14 of Francisella tularensis subsp. novicida (strain U112).